The sequence spans 635 residues: Biosynthetic arginine decarboxylase (635 aa).

The residue at position 100 (lysine 100) is an N6-(pyridoxal phosphate)lysine. 282-292 (IDIGGGLGVDY) contacts substrate.

The protein belongs to the Orn/Lys/Arg decarboxylase class-II family. SpeA subfamily. Mg(2+) is required as a cofactor. It depends on pyridoxal 5'-phosphate as a cofactor.

It carries out the reaction L-arginine + H(+) = agmatine + CO2. It participates in amine and polyamine biosynthesis; agmatine biosynthesis; agmatine from L-arginine: step 1/1. Its function is as follows. Catalyzes the biosynthesis of agmatine from arginine. This is Biosynthetic arginine decarboxylase from Pelobacter propionicus (strain DSM 2379 / NBRC 103807 / OttBd1).